Consider the following 167-residue polypeptide: Ureidoglycolate lyase (167 aa).

This sequence belongs to the ureidoglycolate lyase family. As to quaternary structure, homodimer. Ni(2+) is required as a cofactor.

The catalysed reaction is (S)-ureidoglycolate = urea + glyoxylate. It functions in the pathway nitrogen metabolism; (S)-allantoin degradation. Catalyzes the catabolism of the allantoin degradation intermediate (S)-ureidoglycolate, generating urea and glyoxylate. Involved in the utilization of allantoin as nitrogen source. The protein is Ureidoglycolate lyase of Pseudomonas fluorescens (strain Pf0-1).